Consider the following 422-residue polypeptide: UDP-N-acetyl-D-glucosamine 6-dehydrogenase (422 aa).

Residues V14, D32, R37, T83, and T118 each coordinate NAD(+). C258 (nucleophile) is an active-site residue. R329 lines the NAD(+) pocket.

Belongs to the UDP-glucose/GDP-mannose dehydrogenase family.

It catalyses the reaction UDP-N-acetyl-alpha-D-glucosamine + 2 NAD(+) + H2O = UDP-2-acetamido-2-deoxy-alpha-D-glucuronate + 2 NADH + 3 H(+). Its pathway is bacterial outer membrane biogenesis; LPS O-antigen biosynthesis. With respect to regulation, requires either potassium or ammonium-containing salts for activity. Its function is as follows. Dehydrogenase required for the biosynthesis of the B-band O antigen of serotype O6 lipopolysaccharide. Is also required for flagellin glycosylation. Catalyzes the conversion of UDP-N-acetylglucosamine (UDP-GlcNAc) to UDP-N-acetylglucosaminuronic acid (UDP-GlcNAcA). Can also catalyze the conversion of UDP-N-acetyl-galactosamine (UDP-GalNAc) to UDP-N-acetylgalactosaminuronic acid (UDP-GalNAcA), with low efficiency. Can use NAD(+) or NADP(+), with a preference for NAD(+). This is UDP-N-acetyl-D-glucosamine 6-dehydrogenase from Pseudomonas aeruginosa.